A 54-amino-acid chain; its full sequence is UPF0181 protein PM0480 (54 aa).

Belongs to the UPF0181 family.

This Pasteurella multocida (strain Pm70) protein is UPF0181 protein PM0480.